The following is a 284-amino-acid chain: Cell division protein DivIB (284 aa).

The interval 1–21 (MFGKRKDSKNKAMRDNEELTP) is disordered. Residues 1-63 (MFGKRKDSKN…GLRKRRLQKR (63 aa)) are Cytoplasmic-facing. The chain crosses the membrane as a helical span at residues 64-84 (VITLASIFGISAIISLYAILP). Residues 85 to 284 (VSRVSNIEIE…VGAYAYPYBK (200 aa)) are Extracellular-facing. In terms of domain architecture, POTRA spans 86-156 (SRVSNIEIEG…NVVKFKVTEY (71 aa)).

Belongs to the FtsQ/DivIB family. DivIB subfamily.

Its subcellular location is the cell membrane. Cell division protein that may be involved in stabilizing or promoting the assembly of the division complex. The protein is Cell division protein DivIB of Ligilactobacillus salivarius (strain CECT 5713) (Lactobacillus salivarius).